Here is a 376-residue protein sequence, read N- to C-terminus: Peroxisomal targeting signal 2 receptor (376 aa).

6 WD repeats span residues 58-98 (DTQD…YPVM), 102-142 (EHQR…NTSL), 182-222 (DNND…PLFM), 226-267 (AHNG…PNVH), 279-319 (GHEF…TSRV), and 339-376 (AHTE…QRLQ).

It belongs to the WD repeat peroxin-7 family. As to quaternary structure, interacts with PEX20. Post-translationally, polyubiquitinated, leading to its degradation by the proteasome. Ubiquitination is dependent of PEX5 and PEX20 and takes place following recycling into the cytosol.

It localises to the cytoplasm. Its subcellular location is the cytosol. The protein localises to the peroxisome matrix. Receptor required for the peroxisomal import of proteins containing a C-terminal PTS2-type peroxisomal targeting signal, such as 3-oxoacyl-CoA thiolase. Specifically binds to cargo proteins containing a PTS2 peroxisomal targeting signal in the cytosol. Cargo protein-binding triggers interaction with PEX20 and formation of a ternary complex composed of PEX20 and PEX7 along with PTS2-containing cargo proteins, which is tranlocated into peroxisomes by passing through the peroxisomal docking complex. PEX7 receptor is then retrotranslocated into the cytosol, where it is ubiquitinated and degraded. This chain is Peroxisomal targeting signal 2 receptor, found in Komagataella phaffii (strain GS115 / ATCC 20864) (Yeast).